Consider the following 340-residue polypeptide: Central glycolytic genes regulator (340 aa).

Residues 37–56 constitute a DNA-binding region (H-T-H motif); it reads RRSLSASLGISERVLRGEVQ. Beta-D-fructose 1,6-bisphosphate is bound by residues 149-152, arginine 175, glutamine 185, 250-251, glutamate 269, and lysine 310; these read GGTT and RR.

The protein belongs to the SorC transcriptional regulatory family. In terms of assembly, homotetramer. Binds primarily as a dimer to each half-site of the full-length operator, with much higher affinity for the right site. Then, both dimers interact, bridging the two-half sites of the operator region.

Its activity is regulated as follows. Stability and function are regulated by the effector molecule fructose-1,6-bisphosphate (FBP). In the presence of glucose, binding of FBP to the low-affinity sugar-binding site of CggR disrupts dimer/dimer bridging interactions and triggers a tetramer to dimer transition, which leaves two physically independent dimers on the target DNA and allows transcription of the downstream coding sequences by the RNA polymerase. In addition, FBP and several other phosphorylated compounds can bind to a high-affinity binding-site and protect CggR against aggregation and proteolysis. In the absence of glucose, represses the transcription of the gapA operon, which encodes five key glycolytic enzymes. Binds specifically to the cggR-gapA promoter region and blocks the progression of the RNA polymerase, leading to the arrest of the transcription. This is Central glycolytic genes regulator (cggR) from Bacillus subtilis (strain 168).